Reading from the N-terminus, the 342-residue chain is MQAIDNLTSAPGNTSLCTRDYKITQVLFPLLYTVLFFVGLITNSLAMRIFFQIRSKSNFIIFLKNTVISDLLMILTFPFKILSDAKLGAGPLRTFVCQVTSVIFYFTMYISISFLGLITIDRYQKTTRPFKTSNPKNLLGAKILSVLIWAFMFLLSLPNMILTNRRPRDKNVKKCSFLKSEFGLVWHEIVNYICQVIFWINFLIVIVCYTLITKELYRSYVRTRGVGKVPRKKVNVKVFIIIAVFFICFVPFHFARIPYTLSQTRDVFDCAAENTLFYVKESTLWLTSLNACLDPFIYFFLCKSFRNSLISMLKCPNSATSQSQDNRKKEQDGGDPNEETPM.

At 1 to 27 (MQAIDNLTSAPGNTSLCTRDYKITQVL) the chain is on the extracellular side. Asn-6 and Asn-13 each carry an N-linked (GlcNAc...) asparagine glycan. 2 disulfides stabilise this stretch: Cys-17–Cys-270 and Cys-97–Cys-175. A helical membrane pass occupies residues 28–50 (FPLLYTVLFFVGLITNSLAMRIF). Topologically, residues 51 to 61 (FQIRSKSNFII) are cytoplasmic. Residues Ser-55 and Ser-57 each carry the phosphoserine modification. The chain crosses the membrane as a helical span at residues 62-82 (FLKNTVISDLLMILTFPFKIL). The Extracellular segment spans residues 83 to 97 (SDAKLGAGPLRTFVC). 3 residues coordinate ADP: Arg-93, Cys-97, and Tyr-105. Residues 98-118 (QVTSVIFYFTMYISISFLGLI) traverse the membrane as a helical segment. Over 119-142 (TIDRYQKTTRPFKTSNPKNLLGAK) the chain is Cytoplasmic. The helical transmembrane segment at 143-162 (ILSVLIWAFMFLLSLPNMIL) threads the bilayer. ADP-binding positions include 156-159 (SLPN), 175-179 (CSFLK), His-187, and Asn-191. At 163–185 (TNRRPRDKNVKKCSFLKSEFGLV) the chain is on the extracellular side. The chain crosses the membrane as a helical span at residues 186-207 (WHEIVNYICQVIFWINFLIVIV). The Cytoplasmic segment spans residues 208–233 (CYTLITKELYRSYVRTRGVGKVPRKK). A helical membrane pass occupies residues 234–259 (VNVKVFIIIAVFFICFVPFHFARIPY). Residues 256 to 259 (RIPY), Gln-263, and Lys-280 each bind ADP. Residues 260–278 (TLSQTRDVFDCAAENTLFY) are Extracellular-facing. Residues 279–298 (VKESTLWLTSLNACLDPFIY) traverse the membrane as a helical segment. The Cytoplasmic segment spans residues 299 to 342 (FFLCKSFRNSLISMLKCPNSATSQSQDNRKKEQDGGDPNEETPM). The segment at 317-342 (NSATSQSQDNRKKEQDGGDPNEETPM) is disordered. Over residues 333-342 (GGDPNEETPM) the composition is skewed to acidic residues.

It belongs to the G-protein coupled receptor 1 family.

The protein resides in the cell membrane. Functionally, receptor for ADP and ATP coupled to G-proteins that inhibit the adenylyl cyclase second messenger system. Required for normal platelet aggregation and blood coagulation. The chain is P2Y purinoceptor 12 (P2RY12) from Macaca fascicularis (Crab-eating macaque).